The following is a 337-amino-acid chain: Nicotinate-nucleotide--dimethylbenzimidazole phosphoribosyltransferase (337 aa).

Glu-305 acts as the Proton acceptor in catalysis.

Belongs to the CobT family.

It carries out the reaction 5,6-dimethylbenzimidazole + nicotinate beta-D-ribonucleotide = alpha-ribazole 5'-phosphate + nicotinate + H(+). Its pathway is nucleoside biosynthesis; alpha-ribazole biosynthesis; alpha-ribazole from 5,6-dimethylbenzimidazole: step 1/2. In terms of biological role, catalyzes the synthesis of alpha-ribazole-5'-phosphate from nicotinate mononucleotide (NAMN) and 5,6-dimethylbenzimidazole (DMB). The polypeptide is Nicotinate-nucleotide--dimethylbenzimidazole phosphoribosyltransferase (Roseobacter denitrificans (strain ATCC 33942 / OCh 114) (Erythrobacter sp. (strain OCh 114))).